We begin with the raw amino-acid sequence, 343 residues long: GTPase Obg (343 aa).

The 159-residue stretch at 1–159 folds into the Obg domain; the sequence is MKFLDQAKVY…LNIWLRLKLI (159 aa). Residues 160–327 form the OBG-type G domain; the sequence is ADAGLVGLPN…VLRALMTVIA (168 aa). GTP-binding positions include 166–173, 191–195, 212–215, 279–282, and 308–310; these read GLPNAGKS, FTTLH, DIPG, SQVD, and SAV. Serine 173 and threonine 193 together coordinate Mg(2+).

The protein belongs to the TRAFAC class OBG-HflX-like GTPase superfamily. OBG GTPase family. Monomer. Requires Mg(2+) as cofactor.

The protein resides in the cytoplasm. An essential GTPase which binds GTP, GDP and possibly (p)ppGpp with moderate affinity, with high nucleotide exchange rates and a fairly low GTP hydrolysis rate. Plays a role in control of the cell cycle, stress response, ribosome biogenesis and in those bacteria that undergo differentiation, in morphogenesis control. The chain is GTPase Obg from Mesorhizobium japonicum (strain LMG 29417 / CECT 9101 / MAFF 303099) (Mesorhizobium loti (strain MAFF 303099)).